The following is a 437-amino-acid chain: Aspartic proteinase nepenthesin-1 (437 aa).

An N-terminal signal peptide occupies residues 1–24 (MASSLYSFLLALSIVYIFVAPTHS). Positions 25-78 (TSRTALNHRHEAKVTGFQIMLEHVDSGKNLTKFQLLERAIERGSRRLQRLEAML) are cleaved as a propeptide — activation peptide. Residues Asn-53 and Asn-98 are each glycosylated (N-linked (GlcNAc...) asparagine). A Peptidase A1 domain is found at 95–430 (YLMNLSIGTP…DTGNSVVSFA (336 aa)). The active site involves Asp-113. Disulfide bonds link Cys-123/Cys-126, Cys-129/Cys-203, Cys-150/Cys-168, Cys-155/Cys-163, Cys-240/Cys-434, and Cys-354/Cys-395. Residue Asn-131 is glycosylated (N-linked (GlcNAc...) asparagine). 3 N-linked (GlcNAc...) asparagine glycosylation sites follow: Asn-198, Asn-267, and Asn-307. The active site involves Asp-315. The N-linked (GlcNAc...) asparagine glycan is linked to Asn-345.

It belongs to the peptidase A1 family.

It is found in the secreted. It carries out the reaction Similar to pepsin, but also cleaves on either side of Asp and at Lys-|-Arg.. With respect to regulation, inhibited by pepstatin and by diazoacetyl-D,L-norleucine methyl ester (DAN) in the presence of Cu(2+) ions. Extracellular proteinase found in the pitcher fluid of carnivorous plants. Digest prey for nitrogen uptake. This Nepenthes gracilis (Slender pitcher plant) protein is Aspartic proteinase nepenthesin-1 (nep1).